A 602-amino-acid chain; its full sequence is Cholinesterase (602 aa).

A signal peptide spans 1-28; it reads MQSKGTIISIQFLLRFLLLWVLIGKSHT. N-linked (GlcNAc...) asparagine glycosylation occurs at N85. Cysteines 93 and 120 form a disulfide. N-linked (GlcNAc...) asparagine glycosylation is present at N134. 144-145 contributes to the substrate binding site; the sequence is GG. Residue S226 is the Acyl-ester intermediate of the active site. At S226 the chain carries Phosphoserine. Residues N269 and N284 are each glycosylated (N-linked (GlcNAc...) asparagine). A disulfide bridge connects residues C280 and C291. The active-site Charge relay system is E353. N-linked (GlcNAc...) asparagine glycosylation occurs at N369. A disulfide bridge links C428 with C547. H466 acts as the Charge relay system in catalysis. N-linked (GlcNAc...) asparagine glycans are attached at residues N483, N509, N513, and N514.

This sequence belongs to the type-B carboxylesterase/lipase family. Homotetramer; disulfide-linked. Dimer of dimers.

It is found in the secreted. The enzyme catalyses an acylcholine + H2O = a carboxylate + choline + H(+). Esterase with broad substrate specificity. Contributes to the inactivation of the neurotransmitter acetylcholine. Can degrade neurotoxic organophosphate esters. This chain is Cholinesterase (BCHE), found in Panthera tigris tigris (Bengal tiger).